Consider the following 368-residue polypeptide: tRNA-specific 2-thiouridylase MnmA (368 aa).

Residues 12-19 (AMSGGVDS) and Met38 each bind ATP. The tract at residues 98–100 (NPD) is interaction with target base in tRNA. Cys103 functions as the Nucleophile in the catalytic mechanism. A disulfide bridge links Cys103 with Cys200. Residue Gly128 participates in ATP binding. The interaction with tRNA stretch occupies residues 150–152 (KDQ). Cys200 serves as the catalytic Cysteine persulfide intermediate. An interaction with tRNA region spans residues 312–313 (RY).

Belongs to the MnmA/TRMU family. As to quaternary structure, interacts with TusE.

It localises to the cytoplasm. It catalyses the reaction S-sulfanyl-L-cysteinyl-[protein] + uridine(34) in tRNA + AH2 + ATP = 2-thiouridine(34) in tRNA + L-cysteinyl-[protein] + A + AMP + diphosphate + H(+). Functionally, catalyzes the 2-thiolation of uridine at the wobble position (U34) of tRNA(Lys), tRNA(Glu) and tRNA(Gln), leading to the formation of s(2)U34, the first step of tRNA-mnm(5)s(2)U34 synthesis. Sulfur is provided by IscS, via a sulfur-relay system. Binds ATP and its substrate tRNAs. The sequence is that of tRNA-specific 2-thiouridylase MnmA from Buchnera aphidicola subsp. Acyrthosiphon pisum (strain APS) (Acyrthosiphon pisum symbiotic bacterium).